Reading from the N-terminus, the 311-residue chain is MPLRMIFMGTPEFSVPTLLALAGAGHEIAAVYTQPPRPGGRRGLDLQKSPVHQAAERLGIPVLTPANFKDAADRQTFRDFGADVAVVVAYGLLLPEEILSGTRYGCYNGHASLLPRWRGAAPIQRAIMAGDRETGMMVMKMDKGLDTGPVALAQSVPIDGMMRAGELHDRLMQVGAVLMTEAMARLESGELPLAPQAQEGVAYAAKISKEETRIDFSRPAAEVHNHIRGLSPFPGAWFELDIAGRRERVKVLASEMSEGEGDPGEVLDHTLGIACGEGAVRLTRLQRAGGKALAAADFLRGTPIAAGARIA.

Ser-112 to Pro-115 serves as a coordination point for (6S)-5,6,7,8-tetrahydrofolate.

Belongs to the Fmt family.

The enzyme catalyses L-methionyl-tRNA(fMet) + (6R)-10-formyltetrahydrofolate = N-formyl-L-methionyl-tRNA(fMet) + (6S)-5,6,7,8-tetrahydrofolate + H(+). Attaches a formyl group to the free amino group of methionyl-tRNA(fMet). The formyl group appears to play a dual role in the initiator identity of N-formylmethionyl-tRNA by promoting its recognition by IF2 and preventing the misappropriation of this tRNA by the elongation apparatus. This is Methionyl-tRNA formyltransferase from Rhizobium meliloti (strain 1021) (Ensifer meliloti).